Here is a 218-residue protein sequence, read N- to C-terminus: 3,4-dihydroxy-2-butanone 4-phosphate synthase (218 aa).

D-ribulose 5-phosphate contacts are provided by residues Arg-38–Glu-39, Asp-43, Arg-151–Thr-155, and Glu-175. Glu-39 provides a ligand contact to Mg(2+). His-154 contributes to the Mg(2+) binding site.

This sequence belongs to the DHBP synthase family. As to quaternary structure, homodimer. It depends on Mg(2+) as a cofactor. Requires Mn(2+) as cofactor.

The catalysed reaction is D-ribulose 5-phosphate = (2S)-2-hydroxy-3-oxobutyl phosphate + formate + H(+). Its pathway is cofactor biosynthesis; riboflavin biosynthesis; 2-hydroxy-3-oxobutyl phosphate from D-ribulose 5-phosphate: step 1/1. Its function is as follows. Catalyzes the conversion of D-ribulose 5-phosphate to formate and 3,4-dihydroxy-2-butanone 4-phosphate. In Shewanella frigidimarina (strain NCIMB 400), this protein is 3,4-dihydroxy-2-butanone 4-phosphate synthase.